The primary structure comprises 436 residues: 3-ketoacyl-CoA thiolase (436 aa).

Catalysis depends on Cys-99, which acts as the Acyl-thioester intermediate. Catalysis depends on proton acceptor residues His-392 and Cys-422.

It belongs to the thiolase-like superfamily. Thiolase family. Heterotetramer of two alpha chains (FadJ) and two beta chains (FadI).

Its subcellular location is the cytoplasm. The catalysed reaction is an acyl-CoA + acetyl-CoA = a 3-oxoacyl-CoA + CoA. It functions in the pathway lipid metabolism; fatty acid beta-oxidation. Its function is as follows. Catalyzes the final step of fatty acid oxidation in which acetyl-CoA is released and the CoA ester of a fatty acid two carbons shorter is formed. This is 3-ketoacyl-CoA thiolase from Escherichia coli O1:K1 / APEC.